Consider the following 1065-residue polypeptide: DNA polymerase III subunit alpha (1065 aa).

The protein belongs to the DNA polymerase type-C family. DnaE subfamily. In terms of assembly, DNA polymerase III contains a core (composed of alpha, epsilon and theta chains) that associates with a tau subunit. This core dimerizes to form the PolIII' complex. PolIII' associates with the gamma complex (composed of gamma, delta, delta', psi and chi chains) and with the beta chain to form the complete DNA polymerase III complex.

The protein localises to the cytoplasm. It catalyses the reaction DNA(n) + a 2'-deoxyribonucleoside 5'-triphosphate = DNA(n+1) + diphosphate. DNA polymerase III is a complex, multichain enzyme responsible for most of the replicative synthesis in bacteria. This DNA polymerase also exhibits 3' to 5' exonuclease activity. The alpha chain is the DNA polymerase. In Staphylococcus aureus (strain MSSA476), this protein is DNA polymerase III subunit alpha (dnaE).